A 3799-amino-acid polypeptide reads, in one-letter code: Polyketide synthase GfsE (3799 aa).

Residues 33 to 459 (HEPIAIIGMS…GTNAHAILEE (427 aa)) form the Ketosynthase family 3 (KS3) 1 domain. Module regions lie at residues 33–1730 (HEPI…RSSA) and 1749–3494 (DEAI…RTDL). Active-site for beta-ketoacyl synthase 1 activity residues include cysteine 206, histidine 341, and histidine 381. The disordered stretch occupies residues 462–496 (AATGNPTEADTDQEPAASASPDRTTTLPAVPWPLS). The Malonyl-CoA:ACP transacylase (MAT) 1 domain occupies 582-895 (FVFPGQGSQW…LGEAHAHGAD (314 aa)). The interval 944 to 1069 (HPLFGAVVEV…GVLELEARPE (126 aa)) is N-terminal hotdog fold 1. The PKS/mFAS DH 1 domain occupies 944 to 1222 (HPLFGAVVEV…SRPVAEEQLG (279 aa)). The active-site Proton acceptor; for dehydratase activity 1 is histidine 976. Positions 1081-1222 (AEVVPVEGLY…SRPVAEEQLG (142 aa)) are C-terminal hotdog fold 1. Aspartate 1142 acts as the Proton donor; for dehydratase activity 1 in catalysis. A Ketoreductase (KR) 1 domain is found at 1382-1554 (LLVTGASGVL…TSLSWGLWAE (173 aa)). The region spanning 1652 to 1730 (EAERAVLELV…ALATHIRSSA (79 aa)) is the Carrier 1 domain. An O-(pantetheine 4'-phosphoryl)serine modification is found at serine 1690. Residues 1749–2174 (DEAIAIVGMA…GTNAHVILEQ (426 aa)) enclose the Ketosynthase family 3 (KS3) 2 domain. Catalysis depends on for beta-ketoacyl synthase 2 activity residues cysteine 1921, histidine 2056, and histidine 2096. Residues 2284-2604 (FVFPGQGSQW…VSLAKVHTHG (321 aa)) enclose the Malonyl-CoA:ACP transacylase (MAT) 2 domain. The N-terminal hotdog fold 2 stretch occupies residues 2656-2781 (HPLLTGVVDL…GTLAVDADHD (126 aa)). A PKS/mFAS DH 2 domain is found at 2656-2936 (HPLLTGVVDL…TRPVTAAQFA (281 aa)). Histidine 2688 acts as the Proton acceptor; for dehydratase activity 2 in catalysis. A C-terminal hotdog fold 2 region spans residues 2794-2936 (ADPVDLTEVY…TRPVTAAQFA (143 aa)). The active-site Proton donor; for dehydratase activity 2 is the aspartate 2855. Residues 3142 to 3314 (LLVTGASGVL…TALSWGLWAE (173 aa)) enclose the Ketoreductase (KR) 2 domain. One can recognise a Carrier 2 domain in the interval 3419–3494 (AALLDLVGAQ…ALAAQLRTDL (76 aa)). At serine 3454 the chain carries O-(pantetheine 4'-phosphoryl)serine.

Pantetheine 4'-phosphate is required as a cofactor.

The protein operates within antibiotic biosynthesis. In terms of biological role, fifth protein in the synthesis of the 16-membered macrolide antibiotics FD-891 and FD-892. Composed of 2 modules. Modifies the product of GfsD by multiple rounds of addition of methylmalonyl-CoA and other modifications to help generate the final products. In Streptomyces halstedii, this protein is Polyketide synthase GfsE.